A 249-amino-acid chain; its full sequence is Probable transcriptional regulatory protein DICTH_1505 (249 aa).

It belongs to the TACO1 family.

It is found in the cytoplasm. This is Probable transcriptional regulatory protein DICTH_1505 from Dictyoglomus thermophilum (strain ATCC 35947 / DSM 3960 / H-6-12).